Consider the following 451-residue polypeptide: UDP-N-acetylmuramoylalanine--D-glutamate ligase (451 aa).

119–125 (GSNGKTT) contributes to the ATP binding site.

This sequence belongs to the MurCDEF family.

The protein resides in the cytoplasm. The enzyme catalyses UDP-N-acetyl-alpha-D-muramoyl-L-alanine + D-glutamate + ATP = UDP-N-acetyl-alpha-D-muramoyl-L-alanyl-D-glutamate + ADP + phosphate + H(+). Its pathway is cell wall biogenesis; peptidoglycan biosynthesis. In terms of biological role, cell wall formation. Catalyzes the addition of glutamate to the nucleotide precursor UDP-N-acetylmuramoyl-L-alanine (UMA). The sequence is that of UDP-N-acetylmuramoylalanine--D-glutamate ligase from Streptococcus agalactiae serotype Ia (strain ATCC 27591 / A909 / CDC SS700).